The chain runs to 919 residues: MWLAAAAPSLARRLLFLGPPPPPLLLLVFSRSSRRRLHSLGLAAMPEKRPFERLPADVSPINYSLCLKPDLLDFTFEGKLEAAAQVRQATNQIVMNCADIDIITASYAPEGDEEIHATGFNYQNEDEKVTLSFPSTLQTGTGTLKIDFVGELNDKMKGFYRSKYTTPSGEVRYAAVTQFEATDARRAFPCWDEPAIKATFDISLVVPKDRVALSNMNVIDRKPYPDDENLVEVKFARTPVMSTYLVAFVVGEYDFVETRSKDGVCVRVYTPVGKAEQGKFALEVAAKTLPFYKDYFNVPYPLPKIDLIAIADFAAGAMENWGLVTYRETALLIDPKNSCSSSRQWVALVVGHELAHQWFGNLVTMEWWTHLWLNEGFASWIEYLCVDHCFPEYDIWTQFVSADYTRAQELDALDNSHPIEVSVGHPSEVDEIFDAISYSKGASVIRMLHDYIGDKDFKKGMNMYLTKFQQKNAATEDLWESLENASGKPIAAVMNTWTKQMGFPLIYVEAEQVEDDRLLRLSQKKFCAGGSYVGEDCPQWMVPITISTSEDPNQAKLKILMDKPEMNVVLKNVKPDQWVKLNLGTVGFYRTQYSSAMLESLLPGIRDLSLPPVDRLGLQNDLFSLARAGIISTVEVLKVMEAFVNEPNYTVWSDLSCNLGILSTLLSHTDFYEEIQEFVKDVFSPIGERLGWDPKPGEGHLDALLRGLVLGKLGKAGHKATLEEARRRFKDHVEGKQILSADLRSPVYLTVLKHGDGTTLDIMLKLHKQADMQEEKNRIERVLGATLLPDLIQKVLTFALSEEVRPQDTVSVIGGVAGGSKHGRKAAWKFIKDNWEELYNRYQGGFLISRLIKLSVEGFAVDKMAGEVKAFFESHPAPSAERTIQQCCENILLNAAWLKRDAESIHQYLLQRKASPPTV.

Substrate contacts are provided by residues glutamate 180 and 316–320 (GAMEN). Position 352 (histidine 352) interacts with Zn(2+). Catalysis depends on glutamate 353, which acts as the Proton acceptor. Histidine 356 and glutamate 375 together coordinate Zn(2+). Residue tyrosine 464 is modified to 3'-nitrotyrosine. Positions 726–730 (RRRFK) match the Nuclear localization signal motif.

This sequence belongs to the peptidase M1 family. Monomer. Requires Zn(2+) as cofactor. Detected in liver, epithelium of renal tubules, epithelium of small and large intestine, gastric epithelial cells, and alveoli of the lung (at protein level).

The protein resides in the cytoplasm. It localises to the cytosol. The protein localises to the nucleus. The catalysed reaction is Release of an N-terminal amino acid, preferentially alanine, from a wide range of peptides, amides and arylamides.. Strongly inhibited by bestatin, leuhistin, actinonin, amastatin, 1,10-phenanthroline, DFP, PCMBS, Zn(2+), Cd(2+), Co(2+), Cu(2+), Hg(2+), EDTA and puromycin. Not inhibited by PMSF, and only slightly inhibited by leupeptin and aprotinin. Activity is increased by Mg(2+) and Ca(2+). Aminopeptidase with broad substrate specificity for several peptides. Involved in proteolytic events essential for cell growth and viability. May act as regulator of neuropeptide activity. Plays a role in the antigen-processing pathway for MHC class I molecules. Involved in the N-terminal trimming of cytotoxic T-cell epitope precursors. Digests the poly-Q peptides found in many cellular proteins. Digests tau from normal brain more efficiently than tau from Alzheimer disease brain. This chain is Puromycin-sensitive aminopeptidase (NPEPPS), found in Homo sapiens (Human).